The chain runs to 302 residues: Phosphatidylglycerol--prolipoprotein diacylglyceryl transferase (302 aa).

7 helical membrane passes run 19-39 (FGPL…LLGW), 67-87 (LVLW…FVFY), 108-128 (IWEG…AIIL), 143-163 (LIAP…FING), 203-223 (QLYE…FAIY), 232-252 (GALV…LENV), and 264-284 (LGLT…GWLL). R156 provides a ligand contact to a 1,2-diacyl-sn-glycero-3-phospho-(1'-sn-glycerol).

This sequence belongs to the Lgt family.

The protein localises to the cell inner membrane. It catalyses the reaction L-cysteinyl-[prolipoprotein] + a 1,2-diacyl-sn-glycero-3-phospho-(1'-sn-glycerol) = an S-1,2-diacyl-sn-glyceryl-L-cysteinyl-[prolipoprotein] + sn-glycerol 1-phosphate + H(+). It functions in the pathway protein modification; lipoprotein biosynthesis (diacylglyceryl transfer). Functionally, catalyzes the transfer of the diacylglyceryl group from phosphatidylglycerol to the sulfhydryl group of the N-terminal cysteine of a prolipoprotein, the first step in the formation of mature lipoproteins. The protein is Phosphatidylglycerol--prolipoprotein diacylglyceryl transferase of Caulobacter vibrioides (strain ATCC 19089 / CIP 103742 / CB 15) (Caulobacter crescentus).